The following is a 264-amino-acid chain: Sororin (264 aa).

Positions 1 to 45 (MAERRTRSGGAAQRSGPRTSLTKPSKSSKRKSGSDLPNSFSEIWP) are disordered. Phosphoserine is present on residues Ser-20, Ser-32, Ser-34, Ser-78, and Ser-82. The KEN box motif lies at 87-89 (KEN). Thr-97 is modified (phosphothreonine). Ser-106 carries the phosphoserine modification. Thr-110, Thr-114, and Thr-159 each carry phosphothreonine. Positions 166-168 (FGF) match the FGF motif motif. Position 222 is a phosphoserine (Ser-222). A C-terminal Sororin domain region spans residues 242–264 (LDKWAVAMNAEFEAAEQFELLIE).

The protein belongs to the sororin family. As to quaternary structure, interacts with the APC/C complex. Interacts with the chromatin-bound cohesin complex; the interaction is indirect, occurs after DNA replication and requires acetylation of the cohesin component SMC3. Interacts (via the FGF motif) with PDS5A and PDS5B; the interaction is direct and prevents the interaction of PDS5A with WAPL. Post-translationally, phosphorylated. Phosphorylation, as cells enter mitosis, disrupts the interaction with PDS5A and relieves the inhibition of WAPL by CDCA5. Ubiquitinated by the APC/C complex in G1, leading to its degradation.

Its subcellular location is the nucleus. It is found in the chromosome. The protein localises to the cytoplasm. In terms of biological role, regulator of sister chromatid cohesion in mitosis stabilizing cohesin complex association with chromatin. May antagonize the action of WAPL which stimulates cohesin dissociation from chromatin. Cohesion ensures that chromosome partitioning is accurate in both meiotic and mitotic cells and plays an important role in DNA repair. Required for efficient DNA double-stranded break repair. The chain is Sororin (Cdca5) from Mus musculus (Mouse).